A 126-amino-acid polypeptide reads, in one-letter code: Large ribosomal subunit protein uL22 (126 aa).

The protein belongs to the universal ribosomal protein uL22 family. In terms of assembly, part of the 50S ribosomal subunit.

In terms of biological role, this protein binds specifically to 23S rRNA; its binding is stimulated by other ribosomal proteins, e.g. L4, L17, and L20. It is important during the early stages of 50S assembly. It makes multiple contacts with different domains of the 23S rRNA in the assembled 50S subunit and ribosome. The globular domain of the protein is located near the polypeptide exit tunnel on the outside of the subunit, while an extended beta-hairpin is found that lines the wall of the exit tunnel in the center of the 70S ribosome. This chain is Large ribosomal subunit protein uL22, found in Sphingopyxis alaskensis (strain DSM 13593 / LMG 18877 / RB2256) (Sphingomonas alaskensis).